The following is a 335-amino-acid chain: Zinc-type alcohol dehydrogenase-like protein SAV2186 (335 aa).

It belongs to the zinc-containing alcohol dehydrogenase family. Quinone oxidoreductase subfamily.

This is Zinc-type alcohol dehydrogenase-like protein SAV2186 from Staphylococcus aureus (strain Mu50 / ATCC 700699).